A 501-amino-acid chain; its full sequence is METKDLIVIGGGINGAGIAADAAGRGLSVLMLEAQDLACATSSASSKLIHGGLRYLEHYEFRLVSEALAEREVLLKMAPHIAFPMRFRLPHRPHLRPAWMIRIGLFMYDHLGKRTSLPGSTGLRFGANSVLKPEIKRGFEYSDCWVDDARLVLANAQMVVRKGGEVLTRTRATSARRENGLWIVEAEDIDTGKKYSWQARGLVNATGPWVKQFFDDGMHLPSPYGIRLIKGSHIVVPRVHTQKQAYILQNEDKRIVFVIPWMDEFSIIGTTDVEYKGDPKAVKIEESEINYLLNVYNTHFKKQLSRDDIVWTYSGVRPLCDDESDSPQAITRDYTLDIHDENGKAPLLSVFGGKLTTYRKLAEHALEKLTPYYQGIGPAWTKESVLPGGAIEGDRDDYAARLRRRYPFLTESLARHYARTYGSNSELLLGNAGTVSDLGEDFGHEFYEAELKYLVDHEWVRRADDALWRRTKQGMWLNADQQSRVSQWLVEYTQQRLSLAS.

Position 5–33 (5–33 (DLIVIGGGINGAGIAADAAGRGLSVLMLE)) interacts with FAD.

It belongs to the FAD-dependent glycerol-3-phosphate dehydrogenase family. The cofactor is FAD.

It is found in the cytoplasm. It carries out the reaction a quinone + sn-glycerol 3-phosphate = dihydroxyacetone phosphate + a quinol. The protein operates within polyol metabolism; glycerol degradation via glycerol kinase pathway; glycerone phosphate from sn-glycerol 3-phosphate (aerobic route): step 1/1. In terms of biological role, conversion of glycerol 3-phosphate to dihydroxyacetone. Uses molecular oxygen or nitrate as electron acceptor. The sequence is that of Aerobic glycerol-3-phosphate dehydrogenase (glpD) from Escherichia coli (strain K12).